The sequence spans 221 residues: uncharacterized protein (221 aa).

The protein localises to the mitochondrion. This is an uncharacterized protein from Paramecium tetraurelia.